Consider the following 147-residue polypeptide: Protegrin-2 (147 aa).

Residues 1–29 form the signal peptide; that stretch reads METQRASLCLGRWSLWLLLLALVVPSASA. A propeptide spanning residues 30–130 is cleaved from the precursor; the sequence is QALSYREAVL…DITCNEVQGV (101 aa). Residues 61-80 form a disordered region; the sequence is DQPPKADEDPGTPKPVSFTV. Cystine bridges form between Cys-85-Cys-96, Cys-107-Cys-124, Cys-136-Cys-145, and Cys-138-Cys-143. Residue Val-146 is modified to Valine amide.

Belongs to the cathelicidin family.

The protein localises to the secreted. In terms of biological role, microbicidal activity. Active against E.coli, Listeria monocytogenes and C.albicans, in vitro. This Sus scrofa (Pig) protein is Protegrin-2 (NPG2).